Here is a 269-residue protein sequence, read N- to C-terminus: Diaminopimelate epimerase (269 aa).

Substrate contacts are provided by Asn15 and Asn66. The active-site Proton donor is the Cys75. Substrate-binding positions include 76–77 (GN), Asn152, Asn185, and 203–204 (ER). The active-site Proton acceptor is Cys212. Substrate is bound at residue 213–214 (GT).

Belongs to the diaminopimelate epimerase family. In terms of assembly, homodimer.

The protein localises to the cytoplasm. It catalyses the reaction (2S,6S)-2,6-diaminopimelate = meso-2,6-diaminopimelate. Its pathway is amino-acid biosynthesis; L-lysine biosynthesis via DAP pathway; DL-2,6-diaminopimelate from LL-2,6-diaminopimelate: step 1/1. Its function is as follows. Catalyzes the stereoinversion of LL-2,6-diaminopimelate (L,L-DAP) to meso-diaminopimelate (meso-DAP), a precursor of L-lysine and an essential component of the bacterial peptidoglycan. This Parabacteroides distasonis (strain ATCC 8503 / DSM 20701 / CIP 104284 / JCM 5825 / NCTC 11152) protein is Diaminopimelate epimerase.